A 281-amino-acid polypeptide reads, in one-letter code: Alcohol dehydrogenase-related 31 kDa protein (281 aa).

An NAD(+)-binding site is contributed by 11 to 34 (YVADCGGIALETSKVLMTKNIAKL). Ser-139 serves as a coordination point for substrate. Tyr-152 serves as the catalytic Proton acceptor.

The protein belongs to the short-chain dehydrogenases/reductases (SDR) family.

The protein is Alcohol dehydrogenase-related 31 kDa protein (Adhr) of Drosophila ambigua (Fruit fly).